The chain runs to 345 residues: Opioid-binding protein/cell adhesion molecule (345 aa).

The signal sequence occupies residues 1-27; that stretch reads MGVCGSLFQPWKCLVVVSLRLLFLVPT. Ig-like C2-type domains lie at 39-126, 136-219, and 223-310; these read PKAM…PKTS, PQIM…VKIT, and PPYI…ASIT. N-linked (GlcNAc...) asparagine glycosylation is found at Asn-44, Asn-70, and Asn-140. Cys-57 and Cys-115 are oxidised to a cystine. Cystine bridges form between Cys-157–Cys-202 and Cys-244–Cys-296. Asn-285, Asn-293, and Asn-306 each carry an N-linked (GlcNAc...) asparagine glycan. Asn-322 carries GPI-anchor amidated asparagine lipidation. The propeptide at 323–345 is removed in mature form; it reads SASRALACLWLSGTLFAHFFIKF.

It belongs to the immunoglobulin superfamily. IgLON family.

It localises to the cell membrane. Its function is as follows. Binds opioids in the presence of acidic lipids; probably involved in cell contact. The polypeptide is Opioid-binding protein/cell adhesion molecule (OPCML) (Bos taurus (Bovine)).